Consider the following 92-residue polypeptide: Small integral membrane protein 12 (92 aa).

A helical transmembrane segment spans residues 15–34; sequence YVTFPVAFVVGAVGYHLEWF.

The protein belongs to the SMIM12 family.

Its subcellular location is the membrane. The sequence is that of Small integral membrane protein 12 (SMIM12) from Nomascus leucogenys (Northern white-cheeked gibbon).